The primary structure comprises 168 residues: Small ribosomal subunit protein uS4 (168 aa).

The S4 RNA-binding domain occupies 103–167 (RRLQTIVYKK…SPFKKSIEEK (65 aa)).

Belongs to the universal ribosomal protein uS4 family. As to quaternary structure, part of the 30S ribosomal subunit. Contacts protein S5. The interaction surface between S4 and S5 is involved in control of translational fidelity.

Its function is as follows. One of the primary rRNA binding proteins, it binds directly to 16S rRNA where it nucleates assembly of the body of the 30S subunit. Functionally, with S5 and S12 plays an important role in translational accuracy. The sequence is that of Small ribosomal subunit protein uS4 from Staphylothermus marinus (strain ATCC 43588 / DSM 3639 / JCM 9404 / F1).